Consider the following 426-residue polypeptide: Tyrosine--tRNA ligase (426 aa).

Tyr-38 contributes to the L-tyrosine binding site. Residues 43–52 (PTADSLHIGS) carry the 'HIGH' region motif. L-tyrosine contacts are provided by Tyr-176 and Gln-180. Residues 236 to 240 (KFGKT) carry the 'KMSKS' region motif. Lys-239 contacts ATP. An S4 RNA-binding domain is found at 359 to 426 (QTIVEVLTQS…KKLFNLYIWK (68 aa)).

The protein belongs to the class-I aminoacyl-tRNA synthetase family. TyrS type 1 subfamily. Homodimer.

The protein resides in the cytoplasm. The enzyme catalyses tRNA(Tyr) + L-tyrosine + ATP = L-tyrosyl-tRNA(Tyr) + AMP + diphosphate + H(+). Catalyzes the attachment of tyrosine to tRNA(Tyr) in a two-step reaction: tyrosine is first activated by ATP to form Tyr-AMP and then transferred to the acceptor end of tRNA(Tyr). The chain is Tyrosine--tRNA ligase from Aliivibrio salmonicida (strain LFI1238) (Vibrio salmonicida (strain LFI1238)).